Here is a 234-residue protein sequence, read N- to C-terminus: Transcriptional activator protein TraR (234 aa).

The 66-residue stretch at 167-232 (TAEDAAWLDP…HLTALAIKRK (66 aa)) folds into the HTH luxR-type domain. Positions 191 to 210 (MEEIADVEEVKYNSVRVKLR) form a DNA-binding region, H-T-H motif.

Belongs to the autoinducer-regulated transcriptional regulatory protein family.

In terms of biological role, positive regulation of conjugal transfer of Ti plasmids. In Agrobacterium vitis (Rhizobium vitis), this protein is Transcriptional activator protein TraR (traR).